Reading from the N-terminus, the 187-residue chain is Elongation factor P (187 aa).

Belongs to the elongation factor P family.

Its subcellular location is the cytoplasm. It functions in the pathway protein biosynthesis; polypeptide chain elongation. Involved in peptide bond synthesis. Stimulates efficient translation and peptide-bond synthesis on native or reconstituted 70S ribosomes in vitro. Probably functions indirectly by altering the affinity of the ribosome for aminoacyl-tRNA, thus increasing their reactivity as acceptors for peptidyl transferase. In Rhodococcus jostii (strain RHA1), this protein is Elongation factor P.